Reading from the N-terminus, the 282-residue chain is 4-hydroxy-tetrahydrodipicolinate reductase (282 aa).

NAD(+) is bound by residues 14-19 and 115-117; these read GAMGRM and GTT. The active-site Proton donor/acceptor is the histidine 171. Histidine 172 contributes to the (S)-2,3,4,5-tetrahydrodipicolinate binding site. Lysine 175 (proton donor) is an active-site residue. 181–182 contacts (S)-2,3,4,5-tetrahydrodipicolinate; sequence GT.

It belongs to the DapB family.

The protein resides in the cytoplasm. The enzyme catalyses (S)-2,3,4,5-tetrahydrodipicolinate + NAD(+) + H2O = (2S,4S)-4-hydroxy-2,3,4,5-tetrahydrodipicolinate + NADH + H(+). The catalysed reaction is (S)-2,3,4,5-tetrahydrodipicolinate + NADP(+) + H2O = (2S,4S)-4-hydroxy-2,3,4,5-tetrahydrodipicolinate + NADPH + H(+). It functions in the pathway amino-acid biosynthesis; L-lysine biosynthesis via DAP pathway; (S)-tetrahydrodipicolinate from L-aspartate: step 4/4. Its function is as follows. Catalyzes the conversion of 4-hydroxy-tetrahydrodipicolinate (HTPA) to tetrahydrodipicolinate. This chain is 4-hydroxy-tetrahydrodipicolinate reductase, found in Prochlorococcus marinus (strain NATL2A).